A 249-amino-acid chain; its full sequence is 3-deoxy-D-manno-octulosonic acid kinase (249 aa).

Asp-175 is a catalytic residue.

Belongs to the protein kinase superfamily. KdkA/RfaP family.

It is found in the cell inner membrane. It catalyses the reaction an alpha-Kdo-(2-&gt;6)-lipid IVA + ATP = a 4-O-phospho-alpha-Kdo-(2-&gt;6)-lipid IVA + ADP + H(+). It functions in the pathway bacterial outer membrane biogenesis; LPS core biosynthesis. Functionally, catalyzes the ATP-dependent phosphorylation of the 3-deoxy-D-manno-octulosonic acid (Kdo) residue in Kdo-lipid IV(A) at the 4-OH position. This is 3-deoxy-D-manno-octulosonic acid kinase from Xanthomonas oryzae pv. oryzae (strain PXO99A).